Consider the following 1117-residue polypeptide: Isoleucine--tRNA ligase (1117 aa).

Residues 64–74 (PFANGLPHYGH) carry the 'HIGH' region motif. Positions 647–651 (KLSKR) match the 'KMSKS' region motif. An ATP-binding site is contributed by Lys650.

Belongs to the class-I aminoacyl-tRNA synthetase family. IleS type 2 subfamily. As to quaternary structure, monomer. The cofactor is Zn(2+).

The protein localises to the cytoplasm. The catalysed reaction is tRNA(Ile) + L-isoleucine + ATP = L-isoleucyl-tRNA(Ile) + AMP + diphosphate. Its function is as follows. Catalyzes the attachment of isoleucine to tRNA(Ile). As IleRS can inadvertently accommodate and process structurally similar amino acids such as valine, to avoid such errors it has two additional distinct tRNA(Ile)-dependent editing activities. One activity is designated as 'pretransfer' editing and involves the hydrolysis of activated Val-AMP. The other activity is designated 'posttransfer' editing and involves deacylation of mischarged Val-tRNA(Ile). This chain is Isoleucine--tRNA ligase, found in Ehrlichia ruminantium (strain Welgevonden).